The following is a 596-amino-acid chain: Elongation factor 4 (596 aa).

A tr-type G domain is found at 2–184 (KHIRNFSIIA…VIVEQIPPPE (183 aa)). Residues 14-19 (DHGKST) and 131-134 (NKID) each bind GTP.

The protein belongs to the TRAFAC class translation factor GTPase superfamily. Classic translation factor GTPase family. LepA subfamily.

It localises to the cell inner membrane. It catalyses the reaction GTP + H2O = GDP + phosphate + H(+). Required for accurate and efficient protein synthesis under certain stress conditions. May act as a fidelity factor of the translation reaction, by catalyzing a one-codon backward translocation of tRNAs on improperly translocated ribosomes. Back-translocation proceeds from a post-translocation (POST) complex to a pre-translocation (PRE) complex, thus giving elongation factor G a second chance to translocate the tRNAs correctly. Binds to ribosomes in a GTP-dependent manner. This chain is Elongation factor 4, found in Shewanella oneidensis (strain ATCC 700550 / JCM 31522 / CIP 106686 / LMG 19005 / NCIMB 14063 / MR-1).